The sequence spans 175 residues: Nucleoside diphosphate kinase 6 (175 aa).

6 residues coordinate ATP: K15, F63, R91, T97, R111, and N121. Residue H124 is the Pros-phosphohistidine intermediate of the active site.

The protein belongs to the NDK family. It depends on Mg(2+) as a cofactor.

It catalyses the reaction a 2'-deoxyribonucleoside 5'-diphosphate + ATP = a 2'-deoxyribonucleoside 5'-triphosphate + ADP. It carries out the reaction a ribonucleoside 5'-diphosphate + ATP = a ribonucleoside 5'-triphosphate + ADP. In terms of biological role, major role in the synthesis of nucleoside triphosphates other than ATP. The ATP gamma phosphate is transferred to the NDP beta phosphate via a ping-pong mechanism, using a phosphorylated active-site intermediate. The protein is Nucleoside diphosphate kinase 6 (nme6) of Danio rerio (Zebrafish).